Here is a 148-residue protein sequence, read N- to C-terminus: Large ribosomal subunit protein uL15 (148 aa).

Basic residues predominate over residues 1–30; that stretch reads MPSRLRKTRKLRGHVSHGHGRIGKHRKHPG. Residues 1–37 form a disordered region; sequence MPSRLRKTRKLRGHVSHGHGRIGKHRKHPGGRGNAGG. His-39 carries the post-translational modification (3S)-3-hydroxyhistidine. 2 positions are modified to N6-acetyllysine: Lys-47 and Lys-55. Position 68 is a phosphoserine (Ser-68). Lys-110 carries the post-translational modification N6-acetyllysine.

This sequence belongs to the universal ribosomal protein uL15 family. Component of the large ribosomal subunit. Hydroxylated on His-39 by MINA.

The protein localises to the cytoplasm. Functionally, component of the large ribosomal subunit. The ribosome is a large ribonucleoprotein complex responsible for the synthesis of proteins in the cell. The chain is Large ribosomal subunit protein uL15 (RPL27A) from Bos taurus (Bovine).